The sequence spans 441 residues: MDQEIRSNNYDISVSTVEDTSFEAMDDSILEIIDDEAPEIQGKPKANISTHFRNMLAMFGNFLSLGFFLVIIVLVGIAFEIGGRFCGLILTLALEVYFFSTALLKLFGLRKIALTLHFFEPLLVFILLIIALNASPSIEQNKYASFLASAWNTALLHFTPLFNLLEGMASLLVVQALGHLSRWLVHNKSENWMFFILLNASSAISMSLYLLYRVSSFSISNPNALMIGFSLATVIVISIYGVASGRANLSEASLMFLYIAYTVYMVCTDFGNPNTSSLEKPKFDYLPPNILQSVHYLISTISATLPRTLYNIVLFMVAAAKTVAPSVFATFAFRISVMYAVTRILPAIQNNIIFLEYSRTSKQGMWSILSPCILIAVYTNLLLQHLYPTPSFTSPVNQILCSAEIWRWVSAILTLLLYAIELAYSKESDTGQALASHFKLD.

Helical transmembrane passes span Phe62–Gly82, Leu88–Gly108, Ile112–Leu132, Ala154–Val174, Trp192–Tyr212, Ala224–Ser244, Ala247–Cys267, Ile312–Ala332, Ile335–Leu355, Gln363–Leu383, and Ile399–Ala419.

The protein resides in the membrane. This is an uncharacterized protein from Schizosaccharomyces pombe (strain 972 / ATCC 24843) (Fission yeast).